The sequence spans 311 residues: Glycosyltransferase 6 domain-containing protein 1 (311 aa).

At 1 to 5 (MKAKR) the chain is on the cytoplasmic side. The chain crosses the membrane as a helical; Signal-anchor for type II membrane protein span at residues 6–26 (RILLQLLTFCLFLLLLAKIHF). The Lumenal portion of the chain corresponds to 27-311 (RNHQEEELLL…KIAHHPIDTL (285 aa)). Residue Asn77 is glycosylated (N-linked (GlcNAc...) asparagine). Residues 85–90 (FAVGSL), 176–178 (NIN), and 198–201 (HPWW) each bind substrate. Glu266 functions as the Nucleophile in the catalytic mechanism.

It belongs to the glycosyltransferase 6 family. Mn(2+) serves as cofactor.

It localises to the membrane. In Mus musculus (Mouse), this protein is Glycosyltransferase 6 domain-containing protein 1 (Glt6d1).